A 293-amino-acid polypeptide reads, in one-letter code: Ethanolamine ammonia-lyase small subunit (293 aa).

Adenosylcob(III)alamin is bound by residues Val207 and Glu228.

Belongs to the EutC family. The basic unit is a heterodimer which dimerizes to form tetramers. The heterotetramers trimerize; 6 large subunits form a core ring with 6 small subunits projecting outwards. Adenosylcob(III)alamin is required as a cofactor.

Its subcellular location is the bacterial microcompartment. The catalysed reaction is ethanolamine = acetaldehyde + NH4(+). It participates in amine and polyamine degradation; ethanolamine degradation. In terms of biological role, catalyzes the deamination of various vicinal amino-alcohols to oxo compounds. Allows this organism to utilize ethanolamine as the sole source of nitrogen and carbon in the presence of external vitamin B12. In Clostridioides difficile (strain 630) (Peptoclostridium difficile), this protein is Ethanolamine ammonia-lyase small subunit.